The chain runs to 177 residues: MLKSTLRLSRISLRRGFTTIDCLRQQNSDIDKIILNPIKLAQGSNSDRGQTSKSKTDNADILSMEIPVDMMQSAGRINKRELLSEAEIARSSVENAQMRFNSGKSIIVNKNNPAESFKRLNRIMFENNIPGDKRSQRFYMKPGKVAELKRSQRHRKEFMMGFKRLIEIVKDAKRKGY.

Residues 1-17 (MLKSTLRLSRISLRRGF) constitute a mitochondrion transit peptide.

The protein belongs to the bacterial ribosomal protein bS21 family. In terms of assembly, component of the mitochondrial small ribosomal subunit (mt-SSU). Mature yeast 74S mitochondrial ribosomes consist of a small (37S) and a large (54S) subunit. The 37S small subunit contains a 15S ribosomal RNA (15S mt-rRNA) and 34 different proteins. The 54S large subunit contains a 21S rRNA (21S mt-rRNA) and 46 different proteins.

It is found in the mitochondrion. Component of the mitochondrial ribosome (mitoribosome), a dedicated translation machinery responsible for the synthesis of mitochondrial genome-encoded proteins, including at least some of the essential transmembrane subunits of the mitochondrial respiratory chain. The mitoribosomes are attached to the mitochondrial inner membrane and translation products are cotranslationally integrated into the membrane. This is Small ribosomal subunit protein bS21m (MRP21) from Saccharomyces cerevisiae (strain ATCC 204508 / S288c) (Baker's yeast).